Here is a 199-residue protein sequence, read N- to C-terminus: Imidazoleglycerol-phosphate dehydratase (199 aa).

Belongs to the imidazoleglycerol-phosphate dehydratase family.

It is found in the cytoplasm. It catalyses the reaction D-erythro-1-(imidazol-4-yl)glycerol 3-phosphate = 3-(imidazol-4-yl)-2-oxopropyl phosphate + H2O. It participates in amino-acid biosynthesis; L-histidine biosynthesis; L-histidine from 5-phospho-alpha-D-ribose 1-diphosphate: step 6/9. This is Imidazoleglycerol-phosphate dehydratase from Desulfotalea psychrophila (strain LSv54 / DSM 12343).